A 378-amino-acid chain; its full sequence is Glutamate 5-kinase (378 aa).

ATP is bound at residue Lys19. The substrate site is built by Ser59, Asp146, and Asn158. Residues 178-179 (TD) and 220-226 (TGGMATK) contribute to the ATP site. The PUA domain occupies 285 to 363 (QGQIQVDAGA…GEIGEILGYK (79 aa)).

This sequence belongs to the glutamate 5-kinase family.

It is found in the cytoplasm. The enzyme catalyses L-glutamate + ATP = L-glutamyl 5-phosphate + ADP. It functions in the pathway amino-acid biosynthesis; L-proline biosynthesis; L-glutamate 5-semialdehyde from L-glutamate: step 1/2. Functionally, catalyzes the transfer of a phosphate group to glutamate to form L-glutamate 5-phosphate. This Moorella thermoacetica (strain ATCC 39073 / JCM 9320) protein is Glutamate 5-kinase.